Reading from the N-terminus, the 82-residue chain is Sec-independent protein translocase protein TatA (82 aa).

The helical transmembrane segment at 1 to 21 (MGSLSIWHWLIVGAVVLLVFG) threads the bilayer. Positions 43-82 (GLSEDEEKAEAKPVGEPSLRSLDHQGAGDPLKTPDARKIG) are disordered.

This sequence belongs to the TatA/E family. The Tat system comprises two distinct complexes: a TatABC complex, containing multiple copies of TatA, TatB and TatC subunits, and a separate TatA complex, containing only TatA subunits. Substrates initially bind to the TatABC complex, which probably triggers association of the separate TatA complex to form the active translocon.

The protein localises to the cell inner membrane. Functionally, part of the twin-arginine translocation (Tat) system that transports large folded proteins containing a characteristic twin-arginine motif in their signal peptide across membranes. TatA could form the protein-conducting channel of the Tat system. This is Sec-independent protein translocase protein TatA from Methylocella silvestris (strain DSM 15510 / CIP 108128 / LMG 27833 / NCIMB 13906 / BL2).